We begin with the raw amino-acid sequence, 635 residues long: Voltage-gated potassium channel KCNC4 (635 aa).

Residues M1 to C24 form a disordered region. Positions M1 to E28 are inactivation gate. At M1–R226 the chain is on the cytoplasmic side. Residues S8, S9, S15, and S21 each carry the phosphoserine modification. Zn(2+)-binding residues include H116, C122, C143, and C144. The interval I160–D180 is disordered. The chain crosses the membrane as a helical span at residues V227–T247. Residues N256 and N265 are each glycosylated (N-linked (GlcNAc...) asparagine). The helical transmembrane segment at E278–V298 threads the bilayer. Residues R299–N312 lie on the Cytoplasmic side of the membrane. Residues L313–G333 form a helical membrane-spanning segment. The helical; Voltage-sensor transmembrane segment at F345–F364 threads the bilayer. Residues V365–E380 lie on the Cytoplasmic side of the membrane. A helical transmembrane segment spans residues F381–Y401. T436, L437, G438, and Y439 together coordinate K(+). The short motif at T436–D441 is the Selectivity filter element. The chain crosses the membrane as a helical span at residues V452–V472. Over N473–H635 the chain is Cytoplasmic. Residues K490–R580 form a disordered region. Residues A527–Q542 show a composition bias toward basic and acidic residues.

This sequence belongs to the potassium channel family. C (Shaw) (TC 1.A.1.2) subfamily. Kv3.4/KCNC4 sub-subfamily. In terms of assembly, homotetramer. Heterotetramer of potassium channel proteins. Post-translationally, phosphorylation of serine residues in the inactivation gate inhibits rapid channel closure.

Its subcellular location is the membrane. It carries out the reaction K(+)(in) = K(+)(out). Voltage-gated potassium channel that opens in response to the voltage difference across the membrane, forming a potassium-selective channel through which potassium ions pass in accordance with their electrochemical gradient. The channel displays rapid activation and inactivation kinetics. This is Voltage-gated potassium channel KCNC4 from Homo sapiens (Human).